Reading from the N-terminus, the 94-residue chain is Acylphosphatase (94 aa).

Positions 6 to 92 (RVHVWIRGRV…EGLPTFEIRP (87 aa)) constitute an Acylphosphatase-like domain. Catalysis depends on residues R21 and N39.

Belongs to the acylphosphatase family.

The catalysed reaction is an acyl phosphate + H2O = a carboxylate + phosphate + H(+). The sequence is that of Acylphosphatase (acyP) from Synechococcus sp. (strain JA-2-3B'a(2-13)) (Cyanobacteria bacterium Yellowstone B-Prime).